Consider the following 388-residue polypeptide: Proline-rich protein 5 (388 aa).

Interaction with RICTOR regions lie at residues 10-95 (MSSP…LTKG) and 188-218 (HESR…YGLH). The tract at residues 12–31 (SPSLSDLGKREPAAAADERG) is disordered. The segment covering 18-31 (LGKREPAAAADERG) has biased composition (basic and acidic residues). Ser252 is subject to Phosphoserine. Residues 254–388 (SYNTPLLNPV…EGSGGRQSVV (135 aa)) are disordered. Over residues 336–346 (TRSSLPRSSPE) the composition is skewed to polar residues.

The protein belongs to the PROTOR family. In terms of assembly, associated component of the mechanistic target of rapamycin complex 2 (mTORC2). Binds directly to MTOR and RICTOR within the TORC2 complex. Most abundant in kidney and liver. Also highly expressed in brain, spleen, testis and placenta. Overexpressed in several colorectal tumors.

Its function is as follows. Associated subunit of mTORC2, which regulates cell growth and survival in response to hormonal signals. mTORC2 is activated by growth factors, but, in contrast to mTORC1, seems to be nutrient-insensitive. mTORC2 seems to function upstream of Rho GTPases to regulate the actin cytoskeleton, probably by activating one or more Rho-type guanine nucleotide exchange factors. PRR5 plays an important role in regulation of PDGFRB expression and in modulation of platelet-derived growth factor signaling. May act as a tumor suppressor in breast cancer. The chain is Proline-rich protein 5 (PRR5) from Homo sapiens (Human).